Here is a 374-residue protein sequence, read N- to C-terminus: Glutamine synthetase (374 aa).

Positions 2–25 (TTSASSHLNKGIKQVYMSLPQGEK) are required for glutamine-induced ubiquitination by CRL4(CRBN) and proteasomal degradation. 2 positions are modified to N6-acetyllysine: Lys-11 and Lys-14. In terms of domain architecture, GS beta-grasp spans 24–106 (EKVQAMYIWI…VLCESFQVQF (83 aa)). The GS catalytic domain maps to 114–374 (LRHTCKRIMD…TGDEPFQYKN (261 aa)). Glu-135 is a binding site for ATP. Glu-135, Glu-137, Glu-197, and Glu-204 together coordinate Mn(2+). 204-209 (EFQIGP) is an ATP binding site. Residue 247-248 (NW) coordinates L-glutamate. His-254 lines the Mn(2+) pocket. ATP is bound by residues 256 to 258 (NFS), Arg-320, and Arg-325. Residue Arg-320 coordinates L-glutamate. 337-339 (YFE) serves as a coordination point for ADP. Glu-339 lines the Mn(2+) pocket. Arg-341 is a binding site for L-glutamate. A Phosphoserine modification is found at Ser-344.

The protein belongs to the glutamine synthetase family. Decamer; composed of two pentamers. Interacts with PALMD. Interacts with RHOJ. Interacts with BEST2; this interaction tethers a fraction of GLUL to the membrane, causing a decrease of cytosolic glutamine synthase (GS) activity and inhibits the chloride channel activity of BEST2 by affecting the gating at the aperture in the absence of intracellular glutamate. It depends on Mg(2+) as a cofactor. The cofactor is Mn(2+). In terms of processing, palmitoylated; undergoes autopalmitoylation. Post-translationally, acetylated by EP300/p300; acetylation is stimulated by increased glutamine levels and promotes ubiquitin-mediated proteasomal degradation. Ubiquitinated by ZNRF1. Ubiquitinated by the DCX (DDB1-CUL4-X-box) E3 ubiquitin-protein ligase complex called CRL4(CRBN), leading to proteasomal degradation.

The protein localises to the cytoplasm. The protein resides in the cytosol. It is found in the microsome. It localises to the mitochondrion. Its subcellular location is the cell membrane. The catalysed reaction is L-glutamate + NH4(+) + ATP = L-glutamine + ADP + phosphate + H(+). The enzyme catalyses L-cysteinyl-[protein] + hexadecanoyl-CoA = S-hexadecanoyl-L-cysteinyl-[protein] + CoA. With respect to regulation, glutamine synthetase activity is inhibited by methionine sulfoximine (MSO). Its function is as follows. Glutamine synthetase that catalyzes the ATP-dependent conversion of glutamate and ammonia to glutamine. Its role depends on tissue localization: in the brain, it regulates the levels of toxic ammonia and converts neurotoxic glutamate to harmless glutamine, whereas in the liver, it is one of the enzymes responsible for the removal of ammonia. Plays a key role in ammonium detoxification during erythropoiesis: the glutamine synthetase activity is required to remove ammonium generated by porphobilinogen deaminase (HMBS) during heme biosynthesis to prevent ammonium accumulation and oxidative stress. Essential for proliferation of fetal skin fibroblasts. Independently of its glutamine synthetase activity, required for endothelial cell migration during vascular development. Involved in angiogenesis by regulating membrane localization and activation of the GTPase RHOJ, possibly by promoting RHOJ palmitoylation. May act as a palmitoyltransferase for RHOJ: able to autopalmitoylate and then transfer the palmitoyl group to RHOJ. Plays a role in ribosomal 40S subunit biogenesis. Through the interaction with BEST2, inhibits BEST2 channel activity by affecting the gating at the aperture in the absence of intracellular L-glutamate, but sensitizes BEST2 to intracellular L-glutamate, which promotes the opening of BEST2 and thus relieves its inhibitory effect on BEST2. The polypeptide is Glutamine synthetase (Macaca fascicularis (Crab-eating macaque)).